A 585-amino-acid polypeptide reads, in one-letter code: Arginine--tRNA ligase (585 aa).

The 'HIGH' region signature appears at P126–H136.

Belongs to the class-I aminoacyl-tRNA synthetase family. As to quaternary structure, monomer.

It localises to the cytoplasm. The catalysed reaction is tRNA(Arg) + L-arginine + ATP = L-arginyl-tRNA(Arg) + AMP + diphosphate. The sequence is that of Arginine--tRNA ligase from Picosynechococcus sp. (strain ATCC 27264 / PCC 7002 / PR-6) (Agmenellum quadruplicatum).